Consider the following 790-residue polypeptide: Vacuolar protein sorting-associated protein 35C (790 aa).

Position 1 is an N-acetylmethionine (Met-1).

The protein belongs to the VPS35 family. As to quaternary structure, component of the retromer complex which consists of VPS29 (MAG1), VPS26 (VPS26A or VPS26B), VPS35 (VPS35A or VPS35B or VPS35C), VPS5/17 (SNX1 or SNX2A or SNX2B). Component of a retromer subcomplex consisting of VPS29 (MAG1), VPS26 (VPS26A or VPS26B), VPS35 (VPS35A or VPS35B or VPS35C).

It is found in the cytoplasm. The protein resides in the endosome membrane. The protein localises to the prevacuolar compartment membrane. Its subcellular location is the golgi apparatus. It localises to the trans-Golgi network membrane. Functionally, plays a role in vesicular protein sorting. Component of the membrane-associated retromer complex which is essential in endosome-to-Golgi retrograde transport. Also involved in the efficient sorting of seed storage proteins. The VPS29-VPS26-VPS35 subcomplex may be involved in recycling of specific cargos from endosome to the plasma membrane. This chain is Vacuolar protein sorting-associated protein 35C (VPS35C), found in Arabidopsis thaliana (Mouse-ear cress).